A 327-amino-acid chain; its full sequence is Phenylalanine--tRNA ligase alpha subunit (327 aa).

Glu-252 contributes to the Mg(2+) binding site.

The protein belongs to the class-II aminoacyl-tRNA synthetase family. Phe-tRNA synthetase alpha subunit type 1 subfamily. Tetramer of two alpha and two beta subunits. The cofactor is Mg(2+).

It is found in the cytoplasm. The enzyme catalyses tRNA(Phe) + L-phenylalanine + ATP = L-phenylalanyl-tRNA(Phe) + AMP + diphosphate + H(+). In Shewanella baltica (strain OS223), this protein is Phenylalanine--tRNA ligase alpha subunit.